Consider the following 671-residue polypeptide: DNA ligase (671 aa).

Residues aspartate 34 to aspartate 38, serine 83 to leucine 84, and glutamate 117 each bind NAD(+). The N6-AMP-lysine intermediate role is filled by lysine 119. NAD(+)-binding residues include arginine 140, glutamate 177, lysine 293, and lysine 317. Residues cysteine 411, cysteine 414, cysteine 429, and cysteine 434 each coordinate Zn(2+). Residues lysine 591–glutamine 671 enclose the BRCT domain.

It belongs to the NAD-dependent DNA ligase family. LigA subfamily. Mg(2+) serves as cofactor. It depends on Mn(2+) as a cofactor.

The enzyme catalyses NAD(+) + (deoxyribonucleotide)n-3'-hydroxyl + 5'-phospho-(deoxyribonucleotide)m = (deoxyribonucleotide)n+m + AMP + beta-nicotinamide D-nucleotide.. Functionally, DNA ligase that catalyzes the formation of phosphodiester linkages between 5'-phosphoryl and 3'-hydroxyl groups in double-stranded DNA using NAD as a coenzyme and as the energy source for the reaction. It is essential for DNA replication and repair of damaged DNA. In Geobacter metallireducens (strain ATCC 53774 / DSM 7210 / GS-15), this protein is DNA ligase.